Reading from the N-terminus, the 39-residue chain is U2-ctenitoxin-Co1a (39 aa).

Post-translationally, disulfide bonds are present. Expressed by the venom gland.

It localises to the secreted. In terms of biological role, omega-agatoxins are antagonists of voltage-gated calcium channels (Cav). The polypeptide is U2-ctenitoxin-Co1a (Ctenus ornatus (Brazilian spider)).